Here is a 138-residue protein sequence, read N- to C-terminus: ATP synthase epsilon chain (138 aa).

It belongs to the ATPase epsilon chain family. F-type ATPases have 2 components, CF(1) - the catalytic core - and CF(0) - the membrane proton channel. CF(1) has five subunits: alpha(3), beta(3), gamma(1), delta(1), epsilon(1). CF(0) has three main subunits: a, b and c.

The protein localises to the cell inner membrane. Its function is as follows. Produces ATP from ADP in the presence of a proton gradient across the membrane. This is ATP synthase epsilon chain from Verminephrobacter eiseniae (strain EF01-2).